We begin with the raw amino-acid sequence, 1011 residues long: Protein translocase subunit SecA, chloroplastic (1011 aa).

Polar residues predominate over residues 1–17 (MATSSLCSSFTSQTCNP). Residues 1 to 22 (MATSSLCSSFTSQTCNPHSRPH) are disordered. A chloroplast-targeting transit peptide spans 1-59 (MATSSLCSSFTSQTCNPHSRPHRKTLTLPGSVFLCRQFHLNSPSVSKTRRIRTRQSGPV). 164 to 171 (MRTGEGKT) contacts ATP. Residues 976-1011 (QDKMENQKSGKRNARPPTDTNPDPVGTVEPSTSASS) form a disordered region.

The protein belongs to the SecA family.

The protein resides in the plastid. It is found in the chloroplast stroma. The protein localises to the chloroplast thylakoid membrane. The enzyme catalyses ATP + H2O + chloroplast-proteinSide 1 = ADP + phosphate + chloroplast-proteinSide 2.. Has a central role in coupling the hydrolysis of ATP to the transfer of proteins across the thylakoid membrane. Facilitates the transport of precursor proteins from the chloroplast stroma to thylakoid lumen. The chain is Protein translocase subunit SecA, chloroplastic from Pisum sativum (Garden pea).